The chain runs to 77 residues: Large ribosomal subunit protein uL29 (77 aa).

It belongs to the universal ribosomal protein uL29 family.

The sequence is that of Large ribosomal subunit protein uL29 from Mycolicibacterium smegmatis (strain ATCC 700084 / mc(2)155) (Mycobacterium smegmatis).